Consider the following 644-residue polypeptide: Exoribonuclease 2 (644 aa).

In terms of domain architecture, RNB spans 189–516 (REDLTSLDFV…NHRLLKAVIK (328 aa)). The S1 motif domain occupies 561 to 643 (GTRFAAEIVD…ETRSIIARPV (83 aa)).

Belongs to the RNR ribonuclease family. RNase II subfamily.

It localises to the cytoplasm. The enzyme catalyses Exonucleolytic cleavage in the 3'- to 5'-direction to yield nucleoside 5'-phosphates.. Its function is as follows. Involved in mRNA degradation. Hydrolyzes single-stranded polyribonucleotides processively in the 3' to 5' direction. The polypeptide is Exoribonuclease 2 (Shigella flexneri).